The primary structure comprises 401 residues: Argininosuccinate synthase (401 aa).

10–18 (AYSGGVDTS) provides a ligand contact to ATP. Residue Tyr89 coordinates L-citrulline. Gly119 is an ATP binding site. Residues Thr121, Asn125, and Asp126 each coordinate L-aspartate. Asn125 contacts L-citrulline. Arg129, Ser177, Ser186, Glu262, and Tyr274 together coordinate L-citrulline.

This sequence belongs to the argininosuccinate synthase family. Type 1 subfamily. In terms of assembly, homotetramer.

It localises to the cytoplasm. It catalyses the reaction L-citrulline + L-aspartate + ATP = 2-(N(omega)-L-arginino)succinate + AMP + diphosphate + H(+). It functions in the pathway amino-acid biosynthesis; L-arginine biosynthesis; L-arginine from L-ornithine and carbamoyl phosphate: step 2/3. In Thermosynechococcus vestitus (strain NIES-2133 / IAM M-273 / BP-1), this protein is Argininosuccinate synthase.